A 462-amino-acid chain; its full sequence is 3-oxoacyl-[acyl-carrier-protein] synthase I, chloroplastic (462 aa).

The N-terminal 35 residues, 1–35 (MHAHAAHALGLRVPPPAFPRRRARPRRRPAAAVLA), are a transit peptide targeting the chloroplast. The tract at residues 1–45 (MHAHAAHALGLRVPPPAFPRRRARPRRRPAAAVLATSAAPQRETD) is disordered. The segment covering 19-29 (PRRRARPRRRP) has biased composition (basic residues). The segment covering 30 to 39 (AAAVLATSAA) has biased composition (low complexity). A Ketosynthase family 3 (KS3) domain is found at 47 to 459 (RKRVVITGMG…GHNSVVVFAP (413 aa)). Residues cysteine 213, histidine 353, and histidine 389 each act as for beta-ketoacyl synthase activity in the active site.

Belongs to the thiolase-like superfamily. Beta-ketoacyl-ACP synthases family. As to quaternary structure, homodimer.

Its subcellular location is the plastid. It is found in the chloroplast. The enzyme catalyses a fatty acyl-[ACP] + malonyl-[ACP] + H(+) = a 3-oxoacyl-[ACP] + holo-[ACP] + CO2. In terms of biological role, catalyzes the condensation reaction of fatty acid synthesis by the addition to an acyl acceptor of two carbons from malonyl-ACP. Specific for elongation from C-10 to unsaturated C-16 and C-18 fatty acids. This is 3-oxoacyl-[acyl-carrier-protein] synthase I, chloroplastic (KAS12) from Hordeum vulgare (Barley).